We begin with the raw amino-acid sequence, 64 residues long: Small ribosomal subunit protein bS21 (64 aa).

The protein belongs to the bacterial ribosomal protein bS21 family.

The polypeptide is Small ribosomal subunit protein bS21 (Sulfurihydrogenibium sp. (strain YO3AOP1)).